We begin with the raw amino-acid sequence, 640 residues long: Chitin elicitor receptor kinase 1 (640 aa).

The signal sequence occupies residues Met-1–Gln-31. The Extracellular segment spans residues Arg-32–Gly-248. Disulfide bonds link Cys-43–Cys-104, Cys-49–Cys-166, and Cys-102–Cys-164. LysM domains lie at Ala-53–Leu-98, Phe-113–Ile-160, and Ser-179–Asn-227. Residues Thr-119–Lys-125 and Asp-148–Ser-154 contribute to the chitin site. A helical membrane pass occupies residues Ile-249 to Ile-269. At Phe-270–Leu-640 the chain is on the cytoplasmic side. Positions Met-286–Thr-308 are disordered. A compositionally biased stretch (low complexity) spans Ser-289–Ser-307. Positions Phe-330–Leu-612 constitute a Protein kinase domain. ATP-binding positions include Ile-336 to Val-344 and Lys-357. The active-site Proton acceptor is the Asp-452.

This sequence belongs to the protein kinase superfamily. Ser/Thr protein kinase family.

It is found in the cell membrane. It catalyses the reaction L-seryl-[protein] + ATP = O-phospho-L-seryl-[protein] + ADP + H(+). The catalysed reaction is L-threonyl-[protein] + ATP = O-phospho-L-threonyl-[protein] + ADP + H(+). Functionally, lysin motif (LysM) receptor kinase required as a cell surface receptor for chitin elicitor (chitooligosaccharides) signaling leading to innate immunity in response to biotic stresses. The CERK1, MEKK1a/b, MKK1a/b/c and MPK4a/b proteins are involved in pathogen defense. The pathway induces rapid growth inhibition, cell wall depositions and accumulation of defense-related transcripts. This protein is required for response to chitin. Is able to complement the A.thaliana cerk1 mutant. This Physcomitrium patens (Spreading-leaved earth moss) protein is Chitin elicitor receptor kinase 1.